Reading from the N-terminus, the 424-residue chain is UDP-N-acetylglucosamine 1-carboxyvinyltransferase (424 aa).

22–23 is a binding site for phosphoenolpyruvate; sequence KN. Arginine 93 is a UDP-N-acetyl-alpha-D-glucosamine binding site. Catalysis depends on cysteine 117, which acts as the Proton donor. 2-(S-cysteinyl)pyruvic acid O-phosphothioketal is present on cysteine 117. Residues 162–165, aspartate 307, and isoleucine 329 each bind UDP-N-acetyl-alpha-D-glucosamine; that span reads KVSV.

Belongs to the EPSP synthase family. MurA subfamily.

It is found in the cytoplasm. It carries out the reaction phosphoenolpyruvate + UDP-N-acetyl-alpha-D-glucosamine = UDP-N-acetyl-3-O-(1-carboxyvinyl)-alpha-D-glucosamine + phosphate. It participates in cell wall biogenesis; peptidoglycan biosynthesis. In terms of biological role, cell wall formation. Adds enolpyruvyl to UDP-N-acetylglucosamine. This is UDP-N-acetylglucosamine 1-carboxyvinyltransferase from Actinobacillus pleuropneumoniae serotype 5b (strain L20).